The sequence spans 148 residues: 1,4-dihydroxy-2-naphthoyl-CoA hydrolase (148 aa).

D15 is an active-site residue.

This sequence belongs to the 4-hydroxybenzoyl-CoA thioesterase family. DHNA-CoA hydrolase subfamily.

The enzyme catalyses 1,4-dihydroxy-2-naphthoyl-CoA + H2O = 1,4-dihydroxy-2-naphthoate + CoA + H(+). Its pathway is cofactor biosynthesis; phylloquinone biosynthesis. The protein operates within quinol/quinone metabolism; 1,4-dihydroxy-2-naphthoate biosynthesis; 1,4-dihydroxy-2-naphthoate from chorismate: step 7/7. Its function is as follows. Catalyzes the hydrolysis of 1,4-dihydroxy-2-naphthoyl-CoA (DHNA-CoA) to 1,4-dihydroxy-2-naphthoate (DHNA), a reaction involved in phylloquinone (vitamin K1) biosynthesis. The polypeptide is 1,4-dihydroxy-2-naphthoyl-CoA hydrolase (Nostoc sp. (strain PCC 7120 / SAG 25.82 / UTEX 2576)).